Reading from the N-terminus, the 104-residue chain is L-rhamnose mutarotase (104 aa).

A substrate-binding site is contributed by Y18. The Proton donor role is filled by H22. Residues Y41 and 76–77 (WW) each bind substrate.

Belongs to the rhamnose mutarotase family. Homodimer.

Its subcellular location is the cytoplasm. It catalyses the reaction alpha-L-rhamnose = beta-L-rhamnose. It functions in the pathway carbohydrate metabolism; L-rhamnose metabolism. In terms of biological role, involved in the anomeric conversion of L-rhamnose. The protein is L-rhamnose mutarotase of Lachnoclostridium phytofermentans (strain ATCC 700394 / DSM 18823 / ISDg) (Clostridium phytofermentans).